A 296-amino-acid chain; its full sequence is Protoheme IX farnesyltransferase (296 aa).

Transmembrane regions (helical) follow at residues I13 to I33, Y35 to F55, V84 to A104, L107 to M127, V132 to A152, L162 to F182, I208 to A228, G229 to R249, and F264 to V284.

The protein belongs to the UbiA prenyltransferase family. Protoheme IX farnesyltransferase subfamily.

The protein localises to the cell inner membrane. The enzyme catalyses heme b + (2E,6E)-farnesyl diphosphate + H2O = Fe(II)-heme o + diphosphate. The protein operates within porphyrin-containing compound metabolism; heme O biosynthesis; heme O from protoheme: step 1/1. Converts heme B (protoheme IX) to heme O by substitution of the vinyl group on carbon 2 of heme B porphyrin ring with a hydroxyethyl farnesyl side group. The polypeptide is Protoheme IX farnesyltransferase (Edwardsiella ictaluri (strain 93-146)).